The sequence spans 416 residues: LysM domain-containing GPI-anchored protein 1 (416 aa).

The N-terminal stretch at 1 to 27 (MKIPEKPIFLIFVSLILASSLTFTATA) is a signal peptide. Cystine bridges form between Cys34-Cys100, Cys40-Cys163, Cys98-Cys161, and Cys100-Cys163. Residue Asn37 is glycosylated (N-linked (GlcNAc...) asparagine). In terms of domain architecture, LysM 1 spans 110–157 (THYKTRPSDNLGSIADSVYGGLVSAEQIQEANSVNDPSLLDVGTSLVI). Asn165 is a glycosylation site (N-linked (GlcNAc...) asparagine). One can recognise a LysM 2 domain in the interval 176–219 (LSYVVKEIDTLVGIARRYSTTITDLMNVNAMGAPDVSSGDILAV). 2 disulfides stabilise this stretch: Cys224–Cys256 and Cys251–Cys279. N-linked (GlcNAc...) asparagine glycosylation occurs at Asn241. 3 N-linked (GlcNAc...) asparagine glycosylation sites follow: Asn288, Asn299, and Asn310. The interval 356–376 (DGPGSIASSPRSSMLPGGGIL) is disordered. Ala391 is lipidated: GPI-anchor amidated alanine. The propeptide at 392 to 416 (SASSVSYFFITFLISIASFSLALSS) is removed in mature form.

In terms of assembly, interacts with peptidoglycans.

It is found in the cell membrane. The protein localises to the secreted. In terms of biological role, required as a cell surface receptor for peptidoglycan (PGN) elicitor signaling leading to innate immunity. Plays an essential role in detecting PGNs and restricting bacterial growth (of Pseudomonas syringae pv. tomato DC3000 for example). This chain is LysM domain-containing GPI-anchored protein 1 (LYM1), found in Arabidopsis thaliana (Mouse-ear cress).